A 435-amino-acid chain; its full sequence is Trigger factor (435 aa).

One can recognise a PPIase FKBP-type domain in the interval 163 to 248 (GDFVTFDFKG…VKEIKVKELP (86 aa)).

This sequence belongs to the FKBP-type PPIase family. Tig subfamily.

The protein localises to the cytoplasm. It catalyses the reaction [protein]-peptidylproline (omega=180) = [protein]-peptidylproline (omega=0). In terms of biological role, involved in protein export. Acts as a chaperone by maintaining the newly synthesized protein in an open conformation. Functions as a peptidyl-prolyl cis-trans isomerase. The protein is Trigger factor of Geobacter sp. (strain M21).